A 485-amino-acid chain; its full sequence is P2X purinoceptor 2 (485 aa).

Over 1-43 (MAAAQPRLPAGAAMVRRLARGCWSAFWDYETPKVIVVRNRRLG) the chain is Cytoplasmic. Disulfide bonds link Cys-22–Cys-443, Cys-126–Cys-177, Cys-137–Cys-160, Cys-143–Cys-171, Cys-227–Cys-237, and Cys-271–Cys-280. A helical membrane pass occupies residues 44–64 (FVHRMVQLLILLYFVWYVFIV). The Extracellular segment spans residues 65–339 (QKSYQDSETG…IVHGQAGKFS (275 aa)). ATP is bound by residues Lys-82 and Lys-84. N-linked (GlcNAc...) asparagine glycosylation occurs at Asn-195. Thr-197 contacts ATP. Asn-252 is a glycosylation site (N-linked (GlcNAc...) asparagine). The ATP site is built by Ser-297, Asn-301, and Arg-303. N-linked (GlcNAc...) asparagine glycosylation occurs at Asn-311. Residue Lys-321 participates in ATP binding. The tract at residues 322 to 335 (AYGIRIDVIVHGQA) is pore-forming motif. Residues 340–360 (LIPTIINLATALTSIGVGSFL) traverse the membrane as a helical segment. Topologically, residues 361–485 (CDWILLTFMN…STDPKGLAQL (125 aa)) are cytoplasmic. The interval 406–485 (PPPSHYSQDQ…STDPKGLAQL (80 aa)) is disordered. A compositionally biased stretch (low complexity) spans 420–436 (PSGEGPALGEGAELPLA). The segment covering 469 to 478 (PSQQDSTSTD) has biased composition (polar residues).

It belongs to the P2X receptor family. Homotrimer and heterotrimer; functional P2XRs are organized as homomeric and heteromeric trimers. Homotrimer. Forms heterotrimer with P2XR1. Forms heterotrimer with P2XR3. Forms heterotrimer with P2XR6.

It is found in the cell membrane. It carries out the reaction Ca(2+)(in) = Ca(2+)(out). The catalysed reaction is K(+)(in) = K(+)(out). The enzyme catalyses Na(+)(in) = Na(+)(out). With respect to regulation, fast activation by external ATP. Exhibits slow desensitization during prolonged ATP activation. Not sensitive to the ATP agonist:alpha/beta-methylene-ATP. Its function is as follows. ATP-gated nonselective transmembrane cation channel permeable to potassium, sodium and calcium. Activation by extracellular ATP induces a variety of cellular responses, such as excitatory postsynaptic responses in sensory neurons, neuromuscular junctions (NMJ) formation, hearing, perception of taste and peristalsis. In the inner ear, regulates sound transduction and auditory neurotransmission, outer hair cell electromotility, inner ear gap junctions, and K(+) recycling. Mediates synaptic transmission between neurons and from neurons to smooth muscle. This is P2X purinoceptor 2 (P2rx2) from Mus musculus (Mouse).